The following is a 308-amino-acid chain: Glucan 1,3-beta-glucosidase (308 aa).

The N-terminal stretch at 1-18 (MQIKFLTTLATVLTSVAA) is a signal peptide. The active-site Proton donor is the E119. N197 carries an N-linked (GlcNAc...) asparagine glycan. The active-site Nucleophile is E228.

Belongs to the glycosyl hydrolase 17 family.

It is found in the secreted. It localises to the cell wall. It catalyses the reaction Successive hydrolysis of beta-D-glucose units from the non-reducing ends of (1-&gt;3)-beta-D-glucans, releasing alpha-glucose.. This chain is Glucan 1,3-beta-glucosidase (BGL2), found in Candida albicans (Yeast).